A 202-amino-acid chain; its full sequence is Small ribosomal subunit protein uS4 (202 aa).

A disordered region spans residues 15 to 42; the sequence is LGDLPGLTRKAAKRSYPPGQHGQARRKR. Residues 90–152 form the S4 RNA-binding domain; the sequence is NRLDNVCFRL…KCSKQLAEGN (63 aa).

The protein belongs to the universal ribosomal protein uS4 family. As to quaternary structure, part of the 30S ribosomal subunit. Contacts protein S5. The interaction surface between S4 and S5 is involved in control of translational fidelity.

Functionally, one of the primary rRNA binding proteins, it binds directly to 16S rRNA where it nucleates assembly of the body of the 30S subunit. Its function is as follows. With S5 and S12 plays an important role in translational accuracy. The polypeptide is Small ribosomal subunit protein uS4 (Parasynechococcus marenigrum (strain WH8102)).